A 610-amino-acid polypeptide reads, in one-letter code: All-trans-retinol 13,14-reductase (610 aa).

The N-terminal stretch at 1–18 (MWLPLVLLLAVLLLAVLC) is a signal peptide.

Belongs to the carotenoid/retinoid oxidoreductase family. CrtISO subfamily. It depends on NAD(+) as a cofactor. NADP(+) is required as a cofactor. Requires FAD as cofactor. Expressed in liver; expression positively correlates with obesity and liver steatosis. Expressed in adipose tissue; expression tends to be decreased in obese versus lean individuals.

It localises to the endoplasmic reticulum membrane. The catalysed reaction is all-trans-13,14-dihydroretinol + A = all-trans-retinol + AH2. Catalyzes the saturation of all-trans-retinol to all-trans-13,14-dihydroretinol. Does not exhibit any activity toward all-trans-retinoic acid, nor 9-cis, 11-cis or 13-cis-retinol isomers. May play a role in the metabolism of vitamin A. Independently of retinol conversion, may regulate liver metabolism upstream of MLXIPL/ChREBP. May play a role in adipocyte differentiation. This chain is All-trans-retinol 13,14-reductase (RETSAT), found in Homo sapiens (Human).